The chain runs to 336 residues: Sex determination protein tasselseed-2 (336 aa).

59 to 83 lines the NAD(+) pocket; that stretch reads IVTGGARGIGEAIVRLFAKHGARVV. Ser194 serves as a coordination point for substrate. Tyr207 (proton acceptor) is an active-site residue.

It belongs to the short-chain dehydrogenases/reductases (SDR) family.

Functionally, required for stage-specific floral organ abortion. This is Sex determination protein tasselseed-2 (TS2) from Zea mays (Maize).